The primary structure comprises 367 residues: MAYRVLGRAGPPQPRRARRLLFAFTLSLSCTYLCYSFLCCCDGLGQSRLLGAPRCLRGPSASGQKLLAKSRPCDPPGPTPSEPSAPSAPAAAAPAPRLSGSNHSGSPKPGTKRLPQALIVGVKKGGTRAVLEFIRVHPDVRALGTEPHFFDRNYGRGLDWYRSLMPRTLETQITLEKTPSYFVTQEAPRRIFNMSRDTKLIVVVRNPVTRAISDYTQTLSKKPDIPTFEGLSFRNRSLGLVDVSWNAIRIGMYALHLESWLRYFPLAQIHFVSGERLITDPAGEMGRIQDFLGIKRFITDKHFYFNKTKGFPCLKKPESTLLPRCLGKSKGRTHVQIDPEVIDQLREFYRPYNIKFYETVGQDFRWE.

Residues 1–19 (MAYRVLGRAGPPQPRRARR) lie on the Cytoplasmic side of the membrane. Residues 20–39 (LLFAFTLSLSCTYLCYSFLC) form a helical; Signal-anchor for type II membrane protein membrane-spanning segment. The Lumenal portion of the chain corresponds to 40–367 (CCDGLGQSRL…ETVGQDFRWE (328 aa)). The segment at 66–115 (LLAKSRPCDPPGPTPSEPSAPSAPAAAAPAPRLSGSNHSGSPKPGTKRLP) is disordered. Residues 73–83 (CDPPGPTPSEP) show a composition bias toward pro residues. A compositionally biased stretch (low complexity) spans 84–96 (SAPSAPAAAAPAP). Residue asparagine 102 is glycosylated (N-linked (GlcNAc...) asparagine). 124–128 (KGGTR) is a 3'-phosphoadenylyl sulfate binding site. Substrate contacts are provided by residues 146 to 152 (EPHFFDR) and 177 to 180 (KTPS). N-linked (GlcNAc...) asparagine glycosylation occurs at asparagine 193. Positions 205 and 213 each coordinate 3'-phosphoadenylyl sulfate. Residue asparagine 235 is glycosylated (N-linked (GlcNAc...) asparagine). 245–246 (WN) serves as a coordination point for substrate. The N-linked (GlcNAc...) asparagine glycan is linked to asparagine 306. A disulfide bridge links cysteine 313 with cysteine 325. 330–334 (KGRTH) is a 3'-phosphoadenylyl sulfate binding site.

The protein belongs to the sulfotransferase 1 family.

Its subcellular location is the golgi apparatus membrane. The catalysed reaction is alpha-D-glucosaminyl-[heparan sulfate](n) + 3'-phosphoadenylyl sulfate = 3-sulfo-alpha-D-glucosaminyl-[heparan sulfate](n) + adenosine 3',5'-bisphosphate + H(+). Sulfotransferase that utilizes 3'-phospho-5'-adenylyl sulfate (PAPS) to catalyze the transfer of a sulfo group to an N-unsubstituted glucosamine linked to a 2-O-sulfo iduronic acid unit on heparan sulfate. Catalyzes the O-sulfation of glucosamine in GlcA2S-GlcNS. Unlike HS3ST1/3-OST-1, does not convert non-anticoagulant heparan sulfate to anticoagulant heparan sulfate. The chain is Heparan sulfate glucosamine 3-O-sulfotransferase 2 (Hs3st2) from Mus musculus (Mouse).